Consider the following 247-residue polypeptide: MLRRVSIEETWEVAKNIKAFRLSEKLEFTPGQFIMLWLPGVEEKPLSLADKNLIMVKKVGRFTNELFKLKEGDYVWIRGPYGHGFSGKGKSVALIAGGIGIPPIYALAKYGNFKRSILIYGARTKEEIALPKDIESYVDEVIITTDDGSYGIKGFPTDVLMERRSEFDYVYACGPEIMLAKILEIMEFENVEVSAERYMKCGIGVCGSCALGPYLVCRDGPVFSGKQLINTEFGKYSRTPDGRIKPL.

Positions 1-87 (MLRRVSIEET…RGPYGHGFSG (87 aa)) constitute an FAD-binding FR-type domain. Positions 201, 206, 209, and 217 each coordinate [2Fe-2S] cluster.

It belongs to the PyrK family. As to quaternary structure, heterotetramer of 2 PyrK and 2 PyrD type B subunits. It depends on [2Fe-2S] cluster as a cofactor. FAD is required as a cofactor.

The protein operates within pyrimidine metabolism; UMP biosynthesis via de novo pathway; orotate from (S)-dihydroorotate (NAD(+) route): step 1/1. Responsible for channeling the electrons from the oxidation of dihydroorotate from the FMN redox center in the PyrD type B subunit to the ultimate electron acceptor NAD(+). The polypeptide is Probable dihydroorotate dehydrogenase B (NAD(+)), electron transfer subunit (Pyrococcus furiosus (strain ATCC 43587 / DSM 3638 / JCM 8422 / Vc1)).